A 202-amino-acid polypeptide reads, in one-letter code: Orotate phosphoribosyltransferase (202 aa).

5-phospho-alpha-D-ribose 1-diphosphate contacts are provided by residues K93 and 113–121; that span reads EDIITTGGS. Orotate-binding residues include T117 and R145.

The protein belongs to the purine/pyrimidine phosphoribosyltransferase family. PyrE subfamily. As to quaternary structure, homodimer. The cofactor is Mg(2+).

The enzyme catalyses orotidine 5'-phosphate + diphosphate = orotate + 5-phospho-alpha-D-ribose 1-diphosphate. Its pathway is pyrimidine metabolism; UMP biosynthesis via de novo pathway; UMP from orotate: step 1/2. Functionally, catalyzes the transfer of a ribosyl phosphate group from 5-phosphoribose 1-diphosphate to orotate, leading to the formation of orotidine monophosphate (OMP). The chain is Orotate phosphoribosyltransferase from Campylobacter hominis (strain ATCC BAA-381 / DSM 21671 / CCUG 45161 / LMG 19568 / NCTC 13146 / CH001A).